The chain runs to 223 residues: Translation initiation factor 6 (223 aa).

It belongs to the eIF-6 family. As to quaternary structure, associates with the 50S ribosomal subunit, specifically with protein L14. Binds to 23S rRNA, possibly between where the 30S and 50S subunits associate to initiate translation. In terms of processing, modified in an unknown fashion (not phosphorylation) following release from 50S ribosomal subunits.

In terms of biological role, binds to the 50S ribosomal subunit and prevents its association with the 30S ribosomal subunit to form the 70S initiation complex. Inhibits translation of both leadered and leaderless mRNAs, maybe by binding to the 50S ribosome subunit, preventing it from binding to the 30S subunit. The polypeptide is Translation initiation factor 6 (Saccharolobus solfataricus (strain ATCC 35092 / DSM 1617 / JCM 11322 / P2) (Sulfolobus solfataricus)).